A 236-amino-acid chain; its full sequence is Diaminopimelate epimerase (236 aa).

Substrate is bound by residues asparagine 8 and asparagine 55. Residue cysteine 64 is the Proton donor of the active site. Substrate contacts are provided by residues 65-66 (GN), asparagine 159, and 176-177 (ER). Cysteine 186 functions as the Proton acceptor in the catalytic mechanism. 187–188 (GT) is a substrate binding site.

It belongs to the diaminopimelate epimerase family. Probably forms homotrimers.

It localises to the cytoplasm. The catalysed reaction is (2S,6S)-2,6-diaminopimelate = meso-2,6-diaminopimelate. The protein operates within amino-acid biosynthesis; L-lysine biosynthesis via DAP pathway; DL-2,6-diaminopimelate from LL-2,6-diaminopimelate: step 1/1. Its function is as follows. Catalyzes the stereoinversion of LL-2,6-diaminopimelate (L,L-DAP) to meso-diaminopimelate (meso-DAP), a precursor of L-lysine and an essential component of the bacterial peptidoglycan. Also catalyzes the racemization of certain amino acids, including Lys, with low efficiency. The protein is Diaminopimelate epimerase of Thermotoga maritima (strain ATCC 43589 / DSM 3109 / JCM 10099 / NBRC 100826 / MSB8).